A 116-amino-acid polypeptide reads, in one-letter code: Probable prefoldin subunit 2 (116 aa).

This sequence belongs to the prefoldin subunit beta family. As to quaternary structure, heterohexamer of two PFD-alpha type and four PFD-beta type subunits.

In terms of biological role, binds specifically to cytosolic chaperonin (c-CPN) and transfers target proteins to it. Binds to nascent polypeptide chain and promotes folding in an environment in which there are many competing pathways for nonnative proteins. The polypeptide is Probable prefoldin subunit 2 (pfdn2) (Dictyostelium discoideum (Social amoeba)).